The sequence spans 300 residues: Geranyl diphosphate 2-C-methyltransferase (300 aa).

A disordered region spans residues 1–24 (MAAASAPVPGPGGASSTARGRIPA).

This sequence belongs to the geranyl diphosphate 2-C-methyltransferase family. Requires Mg(2+) as cofactor.

It catalyses the reaction (2E)-geranyl diphosphate + S-adenosyl-L-methionine = (E)-2-methylgeranyl diphosphate + S-adenosyl-L-homocysteine + H(+). Catalyzes the SAM-dependent methylation of geranyl diphosphate (GPP) to yield (E)-2-methylgeranyl diphosphate (2-MeGPP). This Streptomyces lasalocidi (Streptomyces lasaliensis) protein is Geranyl diphosphate 2-C-methyltransferase (gdpmt).